The sequence spans 420 residues: MSFATISVIGLGYIGLPTAAAFASRQKQVIGVDINQHAVDTINRGEIHIVEPDLASVVKTAVEGGFLRASTTPVEADAWLIAVPTPFKGDHEPDMTYVESAARSIAPVLKKGALVILESTSPVGSTEKMAEWLAEMRPDLTFPQQVGEQADVNIAYCPERVLPGQVMVELIKNDRVIGGMTPVCSARASELYKIFLEGECVVTNSRTAEMCKLTENSFRDVNIAFANELSLICADQGINVWELIRLANRHPRVNILQPGPGVGGHCIAVDPWFIVAQNPQQARLIRTAREVNDHKPFWVIDQVKAAVADCLAATDKRASELKIACFGLAFKPNIDDLRESPAMEIAELIAQWHSGETLVVEPNIHQLPKKLTGLCTLAQLDEALATADVLVMLVDHSQFKVINGDNVHQQYVVDAKGVWR.

NAD(+) is bound by residues tyrosine 13, isoleucine 14, aspartate 33, threonine 85, and threonine 126. UDP-N-acetyl-alpha-D-mannosaminouronate-binding residues include arginine 160, valine 161, lysine 212, asparagine 216, arginine 219, histidine 250, arginine 252, and glycine 263. Lysine 212 (proton donor/acceptor) is an active-site residue. Catalysis depends on cysteine 266, which acts as the Nucleophile. Phenylalanine 330 and lysine 331 together coordinate UDP-N-acetyl-alpha-D-mannosaminouronate. Arginine 338 serves as a coordination point for NAD(+). Residue lysine 416 coordinates UDP-N-acetyl-alpha-D-mannosaminouronate.

Belongs to the UDP-glucose/GDP-mannose dehydrogenase family. WecC subfamily. Homodimer.

The catalysed reaction is UDP-N-acetyl-alpha-D-mannosamine + 2 NAD(+) + H2O = UDP-N-acetyl-alpha-D-mannosaminouronate + 2 NADH + 3 H(+). It functions in the pathway bacterial outer membrane biogenesis; enterobacterial common antigen biosynthesis. Catalyzes the four-electron oxidation of UDP-N-acetyl-D-mannosamine (UDP-ManNAc), reducing NAD(+) and releasing UDP-N-acetylmannosaminuronic acid (UDP-ManNAcA). The protein is UDP-N-acetyl-D-mannosamine dehydrogenase of Shigella flexneri.